The primary structure comprises 671 residues: UvrABC system protein B (671 aa).

In terms of domain architecture, Helicase ATP-binding spans 26–183 (EGLENGLAHQ…RRLSELQYSR (158 aa)). 39–46 (GVTGSGKT) contacts ATP. Residues 92 to 115 (YYDYYQPEAYVPSSDTFIEKDASV) carry the Beta-hairpin motif. Positions 431-597 (QVDDLLSEIR…GLNKKIGDIL (167 aa)) constitute a Helicase C-terminal domain. Positions 631–666 (DQKIRELEAKMYTYAQNLEFEQAAELRDQVHQLRQQ) constitute a UVR domain.

It belongs to the UvrB family. Forms a heterotetramer with UvrA during the search for lesions. Interacts with UvrC in an incision complex.

Its subcellular location is the cytoplasm. In terms of biological role, the UvrABC repair system catalyzes the recognition and processing of DNA lesions. A damage recognition complex composed of 2 UvrA and 2 UvrB subunits scans DNA for abnormalities. Upon binding of the UvrA(2)B(2) complex to a putative damaged site, the DNA wraps around one UvrB monomer. DNA wrap is dependent on ATP binding by UvrB and probably causes local melting of the DNA helix, facilitating insertion of UvrB beta-hairpin between the DNA strands. Then UvrB probes one DNA strand for the presence of a lesion. If a lesion is found the UvrA subunits dissociate and the UvrB-DNA preincision complex is formed. This complex is subsequently bound by UvrC and the second UvrB is released. If no lesion is found, the DNA wraps around the other UvrB subunit that will check the other stand for damage. In Yersinia pseudotuberculosis serotype IB (strain PB1/+), this protein is UvrABC system protein B.